Here is a 143-residue protein sequence, read N- to C-terminus: Putative pre-16S rRNA nuclease (143 aa).

The protein belongs to the YqgF nuclease family.

The protein localises to the cytoplasm. Functionally, could be a nuclease involved in processing of the 5'-end of pre-16S rRNA. This Agathobacter rectalis (strain ATCC 33656 / DSM 3377 / JCM 17463 / KCTC 5835 / VPI 0990) (Eubacterium rectale) protein is Putative pre-16S rRNA nuclease.